The following is a 189-amino-acid chain: Ribosome hibernation promotion factor (189 aa).

Belongs to the HPF/YfiA ribosome-associated protein family. Long HPF subfamily. As to quaternary structure, interacts with 100S ribosomes. Not associated with 70S ribosome monomers, about 1 monomer per ribosome.

The protein resides in the cytoplasm. Required for dimerization of active 70S ribosomes into 100S ribosomes in stationary phase; 100S ribosomes are translationally inactive and sometimes present during exponential growth. May not be the only factor implicated. Might negatively regulate the activity of the sigma-54 factor (SigL). In Bacillus subtilis (strain 168), this protein is Ribosome hibernation promotion factor (yvyD).